The chain runs to 161 residues: Ribonuclease P protein component 2 (161 aa).

This sequence belongs to the eukaryotic/archaeal RNase P protein component 2 family. In terms of assembly, consists of a catalytic RNA component and at least 4-5 protein subunits.

It localises to the cytoplasm. The catalysed reaction is Endonucleolytic cleavage of RNA, removing 5'-extranucleotides from tRNA precursor.. Part of ribonuclease P, a protein complex that generates mature tRNA molecules by cleaving their 5'-ends. This Methanopyrus kandleri (strain AV19 / DSM 6324 / JCM 9639 / NBRC 100938) protein is Ribonuclease P protein component 2.